We begin with the raw amino-acid sequence, 178 residues long: MSRIGKQPIAIPSGVDVSVANSVLKFKKGNNTKELDTKGHVDVKVENGHIVFSPKGDDRQSRAYWGTYRALANNIVTGLTSGFTRQLEINGVGYKAAAKGKILELTLGFSHLINYELPSGVEASVDKNIITIKGDDKQVVGQVAAQVRGFRPPEPYKGKGVKYVEERIIRKAGKTSKK.

The protein belongs to the universal ribosomal protein uL6 family. Part of the 50S ribosomal subunit.

Its function is as follows. This protein binds to the 23S rRNA, and is important in its secondary structure. It is located near the subunit interface in the base of the L7/L12 stalk, and near the tRNA binding site of the peptidyltransferase center. This Campylobacter curvus (strain 525.92) protein is Large ribosomal subunit protein uL6.